The sequence spans 186 residues: Alkyl hydroperoxide reductase AhpD (186 aa).

The Proton donor role is filled by C131. C131 and C134 form a disulfide bridge. C134 serves as the catalytic Cysteine sulfenic acid (-SOH) intermediate.

The protein belongs to the AhpD family.

The catalysed reaction is N(6)-[(R)-dihydrolipoyl]-L-lysyl-[lipoyl-carrier protein] + a hydroperoxide = N(6)-[(R)-lipoyl]-L-lysyl-[lipoyl-carrier protein] + an alcohol + H2O. Functionally, antioxidant protein with alkyl hydroperoxidase activity. Required for the reduction of the AhpC active site cysteine residues and for the regeneration of the AhpC enzyme activity. In Rhodospirillum centenum (strain ATCC 51521 / SW), this protein is Alkyl hydroperoxide reductase AhpD.